Here is a 236-residue protein sequence, read N- to C-terminus: MPAGRWTATRRTWRSRRRRLVFIVLSVLILPYALIGLYLLEFIHPVSTLMLRDLVLLRGYDRQWVEFDDIAPVLVQSVMMSEDGQFCAHAGIDWAQMRGVVEDALDGEQTRGASTIPMQTVKNLFLWNGRSFVRKAMELPLAIAADFAWSKRRLMEIYLNVAEWGEGIYGIEAAARHHFGVSAAKLSRRQAALLAVSLPNPIDRTAGKPGRGLRRLAAVIERRAGRSGGYITCLYD.

Residues 20 to 40 form a helical membrane-spanning segment; it reads LVFIVLSVLILPYALIGLYLL.

This sequence belongs to the glycosyltransferase 51 family.

It is found in the cell inner membrane. The enzyme catalyses [GlcNAc-(1-&gt;4)-Mur2Ac(oyl-L-Ala-gamma-D-Glu-L-Lys-D-Ala-D-Ala)](n)-di-trans,octa-cis-undecaprenyl diphosphate + beta-D-GlcNAc-(1-&gt;4)-Mur2Ac(oyl-L-Ala-gamma-D-Glu-L-Lys-D-Ala-D-Ala)-di-trans,octa-cis-undecaprenyl diphosphate = [GlcNAc-(1-&gt;4)-Mur2Ac(oyl-L-Ala-gamma-D-Glu-L-Lys-D-Ala-D-Ala)](n+1)-di-trans,octa-cis-undecaprenyl diphosphate + di-trans,octa-cis-undecaprenyl diphosphate + H(+). It functions in the pathway cell wall biogenesis; peptidoglycan biosynthesis. Its function is as follows. Peptidoglycan polymerase that catalyzes glycan chain elongation from lipid-linked precursors. The polypeptide is Biosynthetic peptidoglycan transglycosylase (Rhizobium meliloti (strain 1021) (Ensifer meliloti)).